Consider the following 123-residue polypeptide: Large ribosomal subunit protein uL24 (123 aa).

The protein belongs to the universal ribosomal protein uL24 family. In terms of assembly, part of the 50S ribosomal subunit.

One of two assembly initiator proteins, it binds directly to the 5'-end of the 23S rRNA, where it nucleates assembly of the 50S subunit. Functionally, located at the polypeptide exit tunnel on the outside of the subunit. In Pyrobaculum islandicum (strain DSM 4184 / JCM 9189 / GEO3), this protein is Large ribosomal subunit protein uL24.